Consider the following 488-residue polypeptide: MTELSALVERVEKLRGTMVLCVGDAMLDRFVYGSVERISPEAPIPVLCIERETAMLGGAGNVVRNLVAVGAEPAFVSVVGDDTAGREVTRLVGEHGEIDPCIVVEPGRQTTIKTRFFASHQQLLRADRESRSPVGEAIRAQLLTRIERLLPKAGVMVLSDYGKGVLAEPIAIELIRRAKAAGKQVIVDPKGTDYTIYAGATVVTPNRKELHEATGQAVDSDEQVVAAARQLIDSCGFEAVLVTRSQDGMTLVRADGQIDHLPAEAREVFDVSGAGDTVVATLAAALASGATLPEAAHLANVAAGIVVGKVGTAVAYGDELVVALHREDLTLGEAKIVPVTAAAEVVDRWRRKGQKVGFTNGCFDLLHPGHVSILAQAKGACDKLVVGLNSDASVQRLKGPTRPVQSEASRATVLSSLATVDLVVIFGEDTPLEVIGTLKPDVLVKGADYTIDKVVGADLVQSWGGKVVLAELVNGQSTTNTIKKMNGN.

Residues 1–331 form a ribokinase region; the sequence is MTELSALVER…VALHREDLTL (331 aa). 206–209 provides a ligand contact to ATP; sequence NRKE. The active site involves aspartate 276. Positions 358 to 488 are cytidylyltransferase; the sequence is FTNGCFDLLH…TNTIKKMNGN (131 aa).

It in the N-terminal section; belongs to the carbohydrate kinase PfkB family. The protein in the C-terminal section; belongs to the cytidylyltransferase family. Homodimer.

It catalyses the reaction D-glycero-beta-D-manno-heptose 7-phosphate + ATP = D-glycero-beta-D-manno-heptose 1,7-bisphosphate + ADP + H(+). The enzyme catalyses D-glycero-beta-D-manno-heptose 1-phosphate + ATP + H(+) = ADP-D-glycero-beta-D-manno-heptose + diphosphate. It functions in the pathway nucleotide-sugar biosynthesis; ADP-L-glycero-beta-D-manno-heptose biosynthesis; ADP-L-glycero-beta-D-manno-heptose from D-glycero-beta-D-manno-heptose 7-phosphate: step 1/4. It participates in nucleotide-sugar biosynthesis; ADP-L-glycero-beta-D-manno-heptose biosynthesis; ADP-L-glycero-beta-D-manno-heptose from D-glycero-beta-D-manno-heptose 7-phosphate: step 3/4. Catalyzes the phosphorylation of D-glycero-D-manno-heptose 7-phosphate at the C-1 position to selectively form D-glycero-beta-D-manno-heptose-1,7-bisphosphate. In terms of biological role, catalyzes the ADP transfer from ATP to D-glycero-beta-D-manno-heptose 1-phosphate, yielding ADP-D-glycero-beta-D-manno-heptose. The protein is Bifunctional protein HldE of Paramagnetospirillum magneticum (strain ATCC 700264 / AMB-1) (Magnetospirillum magneticum).